Consider the following 290-residue polypeptide: 4-hydroxy-3-methylbut-2-enyl diphosphate reductase (290 aa).

Cys13 contributes to the [4Fe-4S] cluster binding site. The (2E)-4-hydroxy-3-methylbut-2-enyl diphosphate site is built by His41 and His75. Dimethylallyl diphosphate contacts are provided by His41 and His75. Isopentenyl diphosphate contacts are provided by His41 and His75. [4Fe-4S] cluster is bound at residue Cys97. His129 lines the (2E)-4-hydroxy-3-methylbut-2-enyl diphosphate pocket. His129 provides a ligand contact to dimethylallyl diphosphate. His129 contacts isopentenyl diphosphate. The Proton donor role is filled by Glu131. Thr167 lines the (2E)-4-hydroxy-3-methylbut-2-enyl diphosphate pocket. Cys198 provides a ligand contact to [4Fe-4S] cluster. Residues Ser226, Ser227, Asn228, and Ser270 each coordinate (2E)-4-hydroxy-3-methylbut-2-enyl diphosphate. Residues Ser226, Ser227, Asn228, and Ser270 each contribute to the dimethylallyl diphosphate site. Residues Ser226, Ser227, Asn228, and Ser270 each coordinate isopentenyl diphosphate.

Belongs to the IspH family. The cofactor is [4Fe-4S] cluster.

The enzyme catalyses isopentenyl diphosphate + 2 oxidized [2Fe-2S]-[ferredoxin] + H2O = (2E)-4-hydroxy-3-methylbut-2-enyl diphosphate + 2 reduced [2Fe-2S]-[ferredoxin] + 2 H(+). The catalysed reaction is dimethylallyl diphosphate + 2 oxidized [2Fe-2S]-[ferredoxin] + H2O = (2E)-4-hydroxy-3-methylbut-2-enyl diphosphate + 2 reduced [2Fe-2S]-[ferredoxin] + 2 H(+). It participates in isoprenoid biosynthesis; dimethylallyl diphosphate biosynthesis; dimethylallyl diphosphate from (2E)-4-hydroxy-3-methylbutenyl diphosphate: step 1/1. Its pathway is isoprenoid biosynthesis; isopentenyl diphosphate biosynthesis via DXP pathway; isopentenyl diphosphate from 1-deoxy-D-xylulose 5-phosphate: step 6/6. In terms of biological role, catalyzes the conversion of 1-hydroxy-2-methyl-2-(E)-butenyl 4-diphosphate (HMBPP) into a mixture of isopentenyl diphosphate (IPP) and dimethylallyl diphosphate (DMAPP). Acts in the terminal step of the DOXP/MEP pathway for isoprenoid precursor biosynthesis. The protein is 4-hydroxy-3-methylbut-2-enyl diphosphate reductase of Parabacteroides distasonis (strain ATCC 8503 / DSM 20701 / CIP 104284 / JCM 5825 / NCTC 11152).